A 94-amino-acid chain; its full sequence is Transcription factor CPC (94 aa).

An S1, required for cell-to-cell movements region spans residues 1 to 10; it reads MFRSDKAEKM. A compositionally biased stretch (basic and acidic residues) spans 1–11; it reads MFRSDKAEKMD. The segment at 1 to 25 is disordered; the sequence is MFRSDKAEKMDKRRRRQSKAKASCS. The Myb-like domain maps to 30–80; the sequence is SIEWEAVKMSEEEEDLISRMYKLVGDRWELIAGRIPGRTPEEIERYWLMKH. The S2, required for cell-to-cell movements and nuclear localization stretch occupies residues 76–79; that stretch reads WLMK.

As to quaternary structure, interacts with GL3 and BHLH2. Interacts with SIEL. As to expression, expressed in trichomes and in young developing leaves, as well as in root hair and stele cells (pericycle and vascular tissues). Expressed in epidermal root hairless cells (atrichoblasts) and moves to root hair cells (trichoblasts) by a cell-to-cell movement through plasmodesmata (at protein level).

The protein resides in the nucleus. In terms of biological role, transcription factor. Determines the fate of epidermal cell differentiation. Represses trichome development by lateral inhibition. Together with GL3 or BHLH2, promotes the formation of hair developing cells (H position) in root epidermis, probably by inhibiting non-hair cell formation. Represses the expression of GL2 and WER in H cells. Positively regulates stomatal formation in the hypocotyl. This Arabidopsis thaliana (Mouse-ear cress) protein is Transcription factor CPC (CPC).